We begin with the raw amino-acid sequence, 105 residues long: Large ribosomal subunit protein eL33 (105 aa).

It belongs to the eukaryotic ribosomal protein eL33 family.

Functionally, the protein was found to bind to both initiator and elongator tRNAs and consequently was assigned to the P site or P and A site. This Dictyostelium discoideum (Social amoeba) protein is Large ribosomal subunit protein eL33 (rpl35a).